The primary structure comprises 427 residues: Glutamate-1-semialdehyde 2,1-aminomutase (427 aa).

K267 is modified (N6-(pyridoxal phosphate)lysine).

It belongs to the class-III pyridoxal-phosphate-dependent aminotransferase family. HemL subfamily. In terms of assembly, homodimer. It depends on pyridoxal 5'-phosphate as a cofactor.

It localises to the cytoplasm. It carries out the reaction (S)-4-amino-5-oxopentanoate = 5-aminolevulinate. It participates in porphyrin-containing compound metabolism; protoporphyrin-IX biosynthesis; 5-aminolevulinate from L-glutamyl-tRNA(Glu): step 2/2. This chain is Glutamate-1-semialdehyde 2,1-aminomutase, found in Desulfosudis oleivorans (strain DSM 6200 / JCM 39069 / Hxd3) (Desulfococcus oleovorans).